Consider the following 598-residue polypeptide: Beta-fructofuranosidase, insoluble isoenzyme 2 (598 aa).

The signal sequence occupies residues 1-25 (MGVLGSRVAWAWLVQLLLLQQLAGA). Residue D69 is part of the active site. N-linked (GlcNAc...) asparagine glycans are attached at residues N164, N189, and N348.

The protein belongs to the glycosyl hydrolase 32 family.

It is found in the secreted. Its subcellular location is the extracellular space. The protein localises to the apoplast. The protein resides in the cell wall. The catalysed reaction is Hydrolysis of terminal non-reducing beta-D-fructofuranoside residues in beta-D-fructofuranosides.. Its function is as follows. May play a role in sucrose partitioning during seed development. This chain is Beta-fructofuranosidase, insoluble isoenzyme 2 (CIN2), found in Oryza sativa subsp. indica (Rice).